The chain runs to 296 residues: Pantothenate synthetase (296 aa).

Residue 30–37 (MGNLHEGH) coordinates ATP. The active-site Proton donor is His-37. Gln-61 contacts (R)-pantoate. A beta-alanine-binding site is contributed by Gln-61. ATP is bound at residue 149-152 (GEKD). A (R)-pantoate-binding site is contributed by Gln-155. ATP is bound by residues Val-178 and 186-189 (MSSR).

This sequence belongs to the pantothenate synthetase family. As to quaternary structure, homodimer.

It localises to the cytoplasm. The catalysed reaction is (R)-pantoate + beta-alanine + ATP = (R)-pantothenate + AMP + diphosphate + H(+). It participates in cofactor biosynthesis; (R)-pantothenate biosynthesis; (R)-pantothenate from (R)-pantoate and beta-alanine: step 1/1. Catalyzes the condensation of pantoate with beta-alanine in an ATP-dependent reaction via a pantoyl-adenylate intermediate. The protein is Pantothenate synthetase of Vibrio atlanticus (strain LGP32) (Vibrio splendidus (strain Mel32)).